A 606-amino-acid chain; its full sequence is Transmembrane 9 superfamily member 1 (606 aa).

The first 27 residues, 1-27 (MTVLGHPRSWSCRWWPLLLLLLLTGRE), serve as a signal peptide directing secretion. N-linked (GlcNAc...) asparagine glycosylation is present at N178. 4 helical membrane-spanning segments follow: residues 237–257 (LSIINSMVLVFLLVGFVAVIL), 310–330 (VLGVGAQFLALGTGIIVMALL), 339–359 (GAINSAAILLYALTCCISGYV), and 373–393 (VWNIILTTSLFSVPFFLTWSV). N401 is a glycosylation site (N-linked (GlcNAc...) asparagine). 4 helical membrane-spanning segments follow: residues 412–432 (ILLLLTVWLLVGFPLTVIGGI), 469–489 (VGGFLPFSAISVELYYIFATV), 499–519 (GILFFVFAILLSVGACISIAL), and 535–555 (SVLSVGSTGLFIFLYSVFYYA). Residue N559 is glycosylated (N-linked (GlcNAc...) asparagine). A helical transmembrane segment spans residues 570 to 590 (FGYSLLTGYVFFLMLGTISFF).

Belongs to the nonaspanin (TM9SF) (TC 9.A.2) family.

The protein localises to the lysosome membrane. Its subcellular location is the cytoplasmic vesicle. It localises to the autophagosome membrane. Its function is as follows. Plays an essential role in autophagy. The sequence is that of Transmembrane 9 superfamily member 1 (TM9SF1) from Bos taurus (Bovine).